A 227-amino-acid polypeptide reads, in one-letter code: Probable septum site-determining protein MinC (227 aa).

It belongs to the MinC family. As to quaternary structure, interacts with MinD and FtsZ.

In terms of biological role, cell division inhibitor that blocks the formation of polar Z ring septums. Rapidly oscillates between the poles of the cell to destabilize FtsZ filaments that have formed before they mature into polar Z rings. Prevents FtsZ polymerization. In Acetivibrio thermocellus (strain ATCC 27405 / DSM 1237 / JCM 9322 / NBRC 103400 / NCIMB 10682 / NRRL B-4536 / VPI 7372) (Clostridium thermocellum), this protein is Probable septum site-determining protein MinC.